The following is a 396-amino-acid chain: Deoxyuridine 5'-triphosphate nucleotidohydrolase (396 aa).

Residues 280 to 282 (RSS) and 380 to 381 (FG) each bind substrate.

The protein belongs to the dUTPase family. Mg(2+) serves as cofactor.

It carries out the reaction dUTP + H2O = dUMP + diphosphate + H(+). Its function is as follows. Involved in nucleotide metabolism: produces dUMP, the immediate precursor of thymidine nucleotides and decreases the intracellular concentration of dUTP to avoid uracil incorporation into viral DNA. This chain is Deoxyuridine 5'-triphosphate nucleotidohydrolase, found in Varicella-zoster virus (strain Dumas) (HHV-3).